The chain runs to 240 residues: Eukaryotic translation initiation factor 3 subunit J (240 aa).

Positions M1–A66 are disordered. Acidic residues predominate over residues G27–K45.

This sequence belongs to the eIF-3 subunit J family. Component of the eukaryotic translation initiation factor 3 (eIF-3) complex. The eIF-3 complex interacts with pix.

The protein resides in the cytoplasm. Functionally, component of the eukaryotic translation initiation factor 3 (eIF-3) complex, which is involved in protein synthesis of a specialized repertoire of mRNAs and, together with other initiation factors, stimulates binding of mRNA and methionyl-tRNAi to the 40S ribosome. The eIF-3 complex specifically targets and initiates translation of a subset of mRNAs involved in cell proliferation. The chain is Eukaryotic translation initiation factor 3 subunit J from Drosophila persimilis (Fruit fly).